Reading from the N-terminus, the 440-residue chain is SET domain-containing protein 4 (440 aa).

Residues 1-16 (MQKGKGRTSRIRRRKL) are compositionally biased toward basic residues. A disordered region spans residues 1-24 (MQKGKGRTSRIRRRKLCGSSESRG). The SET domain maps to 48-273 (SNLAPACFPG…KHEEVFICYG (226 aa)). Tyr272 lines the S-adenosyl-L-methionine pocket.

It belongs to the class V-like SAM-binding methyltransferase superfamily. SETD4 family. Forms a ternary complex with TBK1 and ZNF268; the interaction with TBK1 is ZNF268-dependent and leads to TBK1 monomethylation.

The protein localises to the cytoplasm. The protein resides in the cytosol. It is found in the nucleus. The enzyme catalyses L-lysyl(4)-[histone H3] + S-adenosyl-L-methionine = N(6)-methyl-L-lysyl(4)-[histone H3] + S-adenosyl-L-homocysteine + H(+). It carries out the reaction N(6)-methyl-L-lysyl(4)-[histone H3] + S-adenosyl-L-methionine = N(6),N(6)-dimethyl-L-lysyl(4)-[histone H3] + S-adenosyl-L-homocysteine + H(+). The catalysed reaction is L-lysyl(20)-[histone H4] + S-adenosyl-L-methionine = N(6)-methyl-L-lysyl(20)-[histone H4] + S-adenosyl-L-homocysteine + H(+). It catalyses the reaction N(6)-methyl-L-lysyl(20)-[histone H4] + S-adenosyl-L-methionine = N(6),N(6)-dimethyl-L-lysyl(20)-[histone H4] + S-adenosyl-L-homocysteine + H(+). The enzyme catalyses N(6),N(6)-dimethyl-L-lysyl(20)-[histone H4] + S-adenosyl-L-methionine = N(6),N(6),N(6)-trimethyl-L-lysyl(20)-[histone H4] + S-adenosyl-L-homocysteine + H(+). It carries out the reaction L-lysyl-[protein] + S-adenosyl-L-methionine = N(6)-methyl-L-lysyl-[protein] + S-adenosyl-L-homocysteine + H(+). Its function is as follows. Protein-lysine N-methyltransferase that methylates both histones and non-histone proteins. Via its catalytic activity, regulates many processes, including cell proliferation, cell differentiation, inflammatory response and apoptosis. Regulates the inflammatory response by mediating mono- and dimethylation of 'Lys-4' of histone H3 (H3K4me1 and H3K4me2, respectively), leading to activate the transcription of pro-inflammatory cytokines IL6 and TNF-alpha. Through the catalysis of TBK1 monomethylation, may regulate virus-induced interferon signaling. TBK1 monomethylation enhances its interaction with MAVS, STING and IRF3, hence promoting antiviral interferon signaling. Also involved in the regulation of stem cell quiescence by catalyzing the trimethylation of 'Lys-20' of histone H4 (H4K20me3), thereby promoting heterochromatin formation. In the brain, epigenetically controls quiescence of neural stem cells for sustaining a protected neural stem cell population and maintaining a stem cell reservoir for neurogenesis. Involved in proliferation, migration, paracrine and myogenic differentiation of bone marrow mesenchymal stem cells (BMSCs). Through the catalysis of XRCC5/Ku70 trimethylation, regulates BAX-mediated apoptosis. SETD4-catalyzed XRCC5 methylation results in XRCC5 translocation to the cytoplasm, where it interacts with BAX, sequestering it from the mitochondria, hence preventing BAX-mediated apoptosis. The sequence is that of SET domain-containing protein 4 from Homo sapiens (Human).